A 592-amino-acid chain; its full sequence is Malic enzyme, hydrogenosomal (592 aa).

The transit peptide at 1-27 directs the protein to the hydrogenosome; the sequence is MLAPIQTIARPVSSILPATGALAAKRT. Catalysis depends on tyrosine 134, which acts as the Proton donor. 182–205 lines the NADP(+) pocket; it reads VTDGSRILGLGDLGAGGMQIPIGK. Arginine 187 is an NAD(+) binding site. The active-site Proton acceptor is the lysine 205. A divalent metal cation is bound by residues glutamate 276, aspartate 277, and aspartate 300. Aspartate 300 provides a ligand contact to NAD(+). An NADP(+)-binding site is contributed by 335–352; the sequence is GAGSSGVGVCETIVDCIV. Residue asparagine 443 participates in NAD(+) binding.

Belongs to the malic enzymes family. The cofactor is Mg(2+). Mn(2+) is required as a cofactor.

The protein localises to the hydrogenosome. The catalysed reaction is (S)-malate + NADP(+) = pyruvate + CO2 + NADPH. It catalyses the reaction oxaloacetate + H(+) = pyruvate + CO2. This is Malic enzyme, hydrogenosomal from Neocallimastix frontalis (Rumen fungus).